Here is a 511-residue protein sequence, read N- to C-terminus: Sterol 14-alpha demethylase resB (511 aa).

Residues 3–23 form a helical membrane-spanning segment; it reads ILWIVAYALLAFAASIALNLV. Cysteine 451 is a binding site for heme.

It belongs to the cytochrome P450 family. Requires heme as cofactor.

It localises to the membrane. It carries out the reaction a 14alpha-methyl steroid + 3 reduced [NADPH--hemoprotein reductase] + 3 O2 = a Delta(14) steroid + formate + 3 oxidized [NADPH--hemoprotein reductase] + 4 H2O + 4 H(+). The enzyme catalyses a 14alpha-methyl steroid + reduced [NADPH--hemoprotein reductase] + O2 = a 14alpha-hydroxymethyl steroid + oxidized [NADPH--hemoprotein reductase] + H2O + H(+). The catalysed reaction is a 14alpha-hydroxymethyl steroid + reduced [NADPH--hemoprotein reductase] + O2 = a 14alpha-formyl steroid + oxidized [NADPH--hemoprotein reductase] + 2 H2O + H(+). It catalyses the reaction a 14alpha-formyl steroid + reduced [NADPH--hemoprotein reductase] + O2 = a Delta(14) steroid + formate + oxidized [NADPH--hemoprotein reductase] + H2O + 2 H(+). It carries out the reaction lanosterol + 3 reduced [NADPH--hemoprotein reductase] + 3 O2 = 4,4-dimethyl-5alpha-cholesta-8,14,24-trien-3beta-ol + formate + 3 oxidized [NADPH--hemoprotein reductase] + 4 H2O + 4 H(+). The enzyme catalyses lanosterol + reduced [NADPH--hemoprotein reductase] + O2 = 32-hydroxylanosterol + oxidized [NADPH--hemoprotein reductase] + H2O + H(+). The catalysed reaction is 32-hydroxylanosterol + reduced [NADPH--hemoprotein reductase] + O2 = 32-oxolanosterol + oxidized [NADPH--hemoprotein reductase] + 2 H2O + H(+). It catalyses the reaction 32-oxolanosterol + reduced [NADPH--hemoprotein reductase] + O2 = 4,4-dimethyl-5alpha-cholesta-8,14,24-trien-3beta-ol + formate + oxidized [NADPH--hemoprotein reductase] + H2O + 2 H(+). It carries out the reaction eburicol + 3 reduced [NADPH--hemoprotein reductase] + 3 O2 = 14-demethyleburicol + formate + 3 oxidized [NADPH--hemoprotein reductase] + 4 H2O + 4 H(+). The enzyme catalyses eburicol + reduced [NADPH--hemoprotein reductase] + O2 = 32-hydroxyeburicol + oxidized [NADPH--hemoprotein reductase] + H2O + H(+). The catalysed reaction is 32-hydroxyeburicol + reduced [NADPH--hemoprotein reductase] + O2 = 32-oxoeburicol + oxidized [NADPH--hemoprotein reductase] + 2 H2O + H(+). It catalyses the reaction 32-oxoeburicol + reduced [NADPH--hemoprotein reductase] + O2 = 14-demethyleburicol + formate + oxidized [NADPH--hemoprotein reductase] + H2O + 2 H(+). Sterol 14-alpha demethylase; part of the gene cluster that mediates the biosynthesis of the tetrahydropyranyl antifungal agent restricticin that acts as an inhibitor of CYP51 and blocks the ergosterol biosynthesis. Sterol 14-alpha-demethylase plays a critical role in the biosynthesis of ergosterol, the major sterol component in fungal membranes that participates in a variety of functions. ResB acts as a self-resistant CYP51 that contains mutations found in CYP51s isolated from azole resistance strains and that is not inhibited by the final product of the cluster, restricticin. The protein is Sterol 14-alpha demethylase resB of Aspergillus sclerotiorum.